Consider the following 340-residue polypeptide: GTPase Obg (340 aa).

The 159-residue stretch at 1–159 folds into the Obg domain; that stretch reads MGFIDEVKLC…KHVLLKLKVL (159 aa). One can recognise an OBG-type G domain in the interval 160–329; that stretch reads SDVGIIGMPN…LSEKLKKSNS (170 aa). GTP-binding positions include 166–173, 191–195, 212–215, 279–282, and 310–312; these read GMPNAGKS, FTTVR, DIPG, NKCD, and NGD. Residues S173 and T193 each contribute to the Mg(2+) site.

Belongs to the TRAFAC class OBG-HflX-like GTPase superfamily. OBG GTPase family. As to quaternary structure, monomer. It depends on Mg(2+) as a cofactor.

It is found in the cytoplasm. Functionally, an essential GTPase which binds GTP, GDP and possibly (p)ppGpp with moderate affinity, with high nucleotide exchange rates and a fairly low GTP hydrolysis rate. Plays a role in control of the cell cycle, stress response, ribosome biogenesis and in those bacteria that undergo differentiation, in morphogenesis control. This chain is GTPase Obg, found in Wolbachia pipientis wMel.